A 623-amino-acid polypeptide reads, in one-letter code: Probable methyltransferase PMT8 (623 aa).

The Cytoplasmic portion of the chain corresponds to 1–13; that stretch reads MMRGRSDGGLKKR. A helical; Signal-anchor for type II membrane protein transmembrane segment spans residues 14-34; sequence LIASVCVVALFVCFLFMYYGS. At 35 to 623 the chain is on the lumenal side; the sequence is SSQGASALEY…LTSESLRDSE (589 aa). 3 N-linked (GlcNAc...) asparagine glycosylation sites follow: asparagine 204, asparagine 350, and asparagine 588.

It belongs to the methyltransferase superfamily.

It is found in the golgi apparatus membrane. The sequence is that of Probable methyltransferase PMT8 from Arabidopsis thaliana (Mouse-ear cress).